The sequence spans 549 residues: FMRFamide receptor (549 aa).

Topologically, residues 1–117 (MSGTAVARLL…NNRIEFWVCG (117 aa)) are extracellular. N-linked (GlcNAc...) asparagine glycans are attached at residues asparagine 59, asparagine 70, and asparagine 93. A helical transmembrane segment spans residues 118–138 (VLINIVGVLGILGNIISMIIL). Residues 139–158 (SRPQMRSSINYLLTGLARCD) lie on the Cytoplasmic side of the membrane. A helical membrane pass occupies residues 159-179 (TVLIITSILLFGIPSIYPYTG). At 180 to 181 (HF) the chain is on the extracellular side. Residues 182 to 202 (FGYYNYVYPFISPAVFPIGMI) form a helical membrane-spanning segment. Residues 203-238 (AQTASIYMTFTVTLERYVAVCHPLKARALCTYGRAK) lie on the Cytoplasmic side of the membrane. A helical membrane pass occupies residues 239–259 (IYFIVCVCFSLAYNMPRFWEV). At 260–289 (LTVTYPEPGKDVILHCVRPSRLRRSETYIN) the chain is on the extracellular side. The helical transmembrane segment at 290-310 (IYIHWCYLIVNYIIPFLTLAI) threads the bilayer. The Cytoplasmic portion of the chain corresponds to 311–341 (LNCLIYRQVKRANRERQRLSRSEKREIGLAT). The helical transmembrane segment at 342–362 (MLLCVVIVFFMLNFLPLVLNI) threads the bilayer. Over 363 to 376 (SEAFYSTIDHKITK) the chain is Extracellular. The helical transmembrane segment at 377 to 397 (ISNLLITINSSVNFLIYIIFG) threads the bilayer. Residues 398–549 (EKFKRIFLLI…KKLGHVSSGF (152 aa)) lie on the Cytoplasmic side of the membrane.

The protein belongs to the G-protein coupled receptor 1 family. In terms of tissue distribution, expressed in ovaries, heads and bodies. Expressed in dopaminergic neurons.

The protein localises to the cell membrane. Its function is as follows. A receptor for the FMRFamide peptides. Reacts with high affinity to FMRFamide and intrinsic FMRFamide-related peptides. By stimulating intracellular calcium signaling through the inositol 1,4,5-trisphosphate receptor, Itpr, in dopaminergic neurons, may be involved in the maintenance of neuronal excitability and in the regulation of flight bout duration. This chain is FMRFamide receptor, found in Drosophila melanogaster (Fruit fly).